Reading from the N-terminus, the 382-residue chain is MSLKEKTQSLFANAFGYPATHTIQAPGRVNLIGEHTDYNDGFVLPCAIDYQTVISCAPRDDRKVRVMAADYENQLDEFSLDAPIIAHENYQWANYVRGVVKHLQLRNNSFGGVDMVISGNVPQGAGLSSSASLEVAVGTVLQQLYHLPLDGAQIALNGQEAENQFVGCNCGIMDQLISALGKKDHALLIDCRSLGTKAVSMPKGVAVVIINSNFKRTLVGSEYNTRREQCETGARFFQQPALRDVTIEEFNAVAHELDPIVAKRVRHILTENARTVEAASALEQGDLKRMGELMAESHASMRDDFEITVPQIDTLVEIVKAVIGDKGGVRMTGGGFGGCIVALIPEELVPAVQQAVAEQYEAKTGIKETFYVCKPSQGAGQC.

Residue 34 to 37 (EHTD) participates in substrate binding. An ATP-binding site is contributed by 124–130 (GAGLSSS). Mg(2+)-binding residues include S130 and E162. Catalysis depends on D174, which acts as the Proton acceptor. Y223 lines the substrate pocket.

Belongs to the GHMP kinase family. GalK subfamily.

The protein localises to the cytoplasm. The enzyme catalyses alpha-D-galactose + ATP = alpha-D-galactose 1-phosphate + ADP + H(+). Its pathway is carbohydrate metabolism; galactose metabolism. Its function is as follows. Catalyzes the transfer of the gamma-phosphate of ATP to D-galactose to form alpha-D-galactose-1-phosphate (Gal-1-P). The sequence is that of Galactokinase from Escherichia coli O7:K1 (strain IAI39 / ExPEC).